The following is a 160-amino-acid chain: Regulatory protein RecX (160 aa).

This sequence belongs to the RecX family.

It is found in the cytoplasm. In terms of biological role, modulates RecA activity. This is Regulatory protein RecX from Pelodictyon phaeoclathratiforme (strain DSM 5477 / BU-1).